A 123-amino-acid polypeptide reads, in one-letter code: Large ribosomal subunit protein bL12 (123 aa).

This sequence belongs to the bacterial ribosomal protein bL12 family. In terms of assembly, homodimer. Part of the ribosomal stalk of the 50S ribosomal subunit. Forms a multimeric L10(L12)X complex, where L10 forms an elongated spine to which 2 to 4 L12 dimers bind in a sequential fashion. Binds GTP-bound translation factors.

Its function is as follows. Forms part of the ribosomal stalk which helps the ribosome interact with GTP-bound translation factors. Is thus essential for accurate translation. The chain is Large ribosomal subunit protein bL12 from Burkholderia vietnamiensis (strain G4 / LMG 22486) (Burkholderia cepacia (strain R1808)).